A 359-amino-acid chain; its full sequence is Photosystem II protein D1 2 (359 aa).

3 consecutive transmembrane segments (helical) span residues Tyr29–Thr46, His118–Leu133, and Trp142–Ala156. Residue His118 participates in chlorophyll a binding. Tyr126 serves as a coordination point for pheophytin a. Asp170 and Glu189 together coordinate [CaMn4O5] cluster. A helical membrane pass occupies residues Phe197–Leu218. His198 is a chlorophyll a binding site. Residues His215 and Ser264 to Phe265 each bind a quinone. Position 215 (His215) interacts with Fe cation. His272 provides a ligand contact to Fe cation. Residues Phe274–Leu288 traverse the membrane as a helical segment. Residues His332, Glu333, Asp342, and Ala344 each coordinate [CaMn4O5] cluster. The propeptide occupies Ala345–Gly359.

This sequence belongs to the reaction center PufL/M/PsbA/D family. As to quaternary structure, PSII is composed of 1 copy each of membrane proteins PsbA, PsbB, PsbC, PsbD, PsbE, PsbF, PsbH, PsbI, PsbJ, PsbK, PsbL, PsbM, PsbT, PsbX, PsbY, PsbZ, Psb30/Ycf12, peripheral proteins PsbO, CyanoQ (PsbQ), PsbU, PsbV and a large number of cofactors. It forms dimeric complexes. The D1/D2 heterodimer binds P680, chlorophylls that are the primary electron donor of PSII, and subsequent electron acceptors. It shares a non-heme iron and each subunit binds pheophytin, quinone, additional chlorophylls, carotenoids and lipids. D1 provides most of the ligands for the Mn4-Ca-O5 cluster of the oxygen-evolving complex (OEC). There is also a Cl(-1) ion associated with D1 and D2, which is required for oxygen evolution. The PSII complex binds additional chlorophylls, carotenoids and specific lipids. serves as cofactor. Tyr-161 forms a radical intermediate that is referred to as redox-active TyrZ, YZ or Y-Z. In terms of processing, C-terminally processed by CtpA; processing is essential to allow assembly of the oxygen-evolving complex and thus photosynthetic growth.

The protein resides in the cellular thylakoid membrane. It catalyses the reaction 2 a plastoquinone + 4 hnu + 2 H2O = 2 a plastoquinol + O2. In terms of biological role, photosystem II (PSII) is a light-driven water:plastoquinone oxidoreductase that uses light energy to abstract electrons from H(2)O, generating O(2) and a proton gradient subsequently used for ATP formation. It consists of a core antenna complex that captures photons, and an electron transfer chain that converts photonic excitation into a charge separation. The D1/D2 (PsbA/PsbD) reaction center heterodimer binds P680, the primary electron donor of PSII as well as several subsequent electron acceptors. The sequence is that of Photosystem II protein D1 2 from Synechococcus sp. (strain CC9311).